We begin with the raw amino-acid sequence, 605 residues long: Solute carrier family 23 member 1 (605 aa).

The tract at residues 1 to 30 (MKTPEDPGSPKQHEVVDSAGTSTRDRQAPL) is disordered. The Cytoplasmic portion of the chain corresponds to 1–59 (MKTPEDPGSPKQHEVVDSAGTSTRDRQAPLPTEPKFDMLYKIEDVPPWYLCILLGFQHY). The chain crosses the membrane as a helical span at residues 60-80 (LTCFSGTIAVPFLLAEALCVG). Over 81 to 88 (RDQHMVSQ) the chain is Extracellular. A helical membrane pass occupies residues 89 to 109 (LIGTIFTCVGITTLIQTTVGI). R110 is a topological domain (cytoplasmic). A helical transmembrane segment spans residues 111–131 (LPLFQASAFAFLVPAKSILAL). The Extracellular portion of the chain corresponds to 132-166 (ERWKCPSEEEIYGNWSMPLNTSHIWHPRIREVQGA). N-linked (GlcNAc...) asparagine glycosylation is found at N145 and N151. Residues 167-187 (IMVSSMVEVVIGLMGLPGALL) form a helical membrane-spanning segment. At 188–214 (SYIGPLTVTPTVSLIGLSVFQAAGDRA) the chain is on the cytoplasmic side. Residues 215-232 (GSHWGISACSILLIVLFS) form a helical membrane-spanning segment. Topologically, residues 233 to 236 (QYLR) are extracellular. The helical intramembrane region spans 237–250 (NLTFLLPVYRWGKG). The Extracellular segment spans residues 251 to 257 (LTLFRVQ). The chain crosses the membrane as a helical span at residues 258–278 (IFKMFPIVLAIMTVWLLCYVL). Residues 279 to 319 (TLTDVLPADPTVYGFQARTDARGDIMAISPWIRIPYPCQWG) lie on the Cytoplasmic side of the membrane. The chain crosses the membrane as a helical span at residues 320 to 340 (LPTVTVAAVLGMFSATLAGII). The Extracellular portion of the chain corresponds to 341–365 (ESIGDYYACARLAGAPPPPVHAINR). Residues 366–386 (GIFTEGICCIIAGLLGTGNGS) form a helical membrane-spanning segment. Topologically, residues 387 to 409 (TSSSPNIGVLGITKVGSRRVVQY) are cytoplasmic. A helical membrane pass occupies residues 410–430 (GAGIMLILGAIGKFTALFASL). Over 431-433 (PDP) the chain is Extracellular. Residues 434-454 (ILGGMFCTLFGMITAVGLSNL) traverse the membrane as a helical segment. Topologically, residues 455 to 464 (QFVDMNSSRN) are cytoplasmic. A helical transmembrane segment spans residues 465–485 (LFVLGFSMFFGLTLPNYLDSN). Topologically, residues 486–497 (PGAINTGIPEVD) are extracellular. A helical transmembrane segment spans residues 498–518 (QILTVLLTTEMFVGGCLAFIL). The Cytoplasmic segment spans residues 519–605 (DNTVPGSPEE…IETGSVCTKV (87 aa)). T598 is modified (phosphothreonine). S600 carries the post-translational modification Phosphoserine. At T603 the chain carries Phosphothreonine.

It belongs to the nucleobase:cation symporter-2 (NCS2) (TC 2.A.40) family. Phosphorylated. As to expression, expressed in kidney (at protein level).

Its subcellular location is the cell membrane. The enzyme catalyses L-ascorbate(out) + 2 Na(+)(out) = L-ascorbate(in) + 2 Na(+)(in). It carries out the reaction urate(out) + 2 Na(+)(out) = urate(in) + 2 Na(+)(in). Functionally, sodium:L-ascorbate cotransporter. Mediates electrogenic uptake of vitamin C, with a stoichiometry of 2 Na(+) for each L-ascorbate. Has retained some ancestral activity toward nucleobases such as urate, an oxidized purine. Low-affinity high-capacity sodium:urate cotransporter, may regulate serum urate levels by serving as a renal urate re-absorber. The sequence is that of Solute carrier family 23 member 1 (Slc23a1) from Mus musculus (Mouse).